Consider the following 258-residue polypeptide: Sec-independent protein translocase protein TatC (258 aa).

Residues 2–23 (SVEDTQPLITHLIELRKRLLNC) lie on the Cytoplasmic side of the membrane. Residues 24-44 (IIAVIVIFLCLVYFANDIYHL) traverse the membrane as a helical segment. Topologically, residues 45–75 (VSAPLIKQLPQGSTMIATDVASPFFTPIKLT) are periplasmic. Residues 76–96 (FMVSLILSAPVILYQVWAFIA) traverse the membrane as a helical segment. Topologically, residues 97–115 (PALYKHERRLVVPLLVSSS) are cytoplasmic. The helical transmembrane segment at 116 to 136 (LLFYIGMAFAYFVVFPLAFGF) threads the bilayer. The Periplasmic segment spans residues 137–156 (LANTAPEGVQVSTDIASYLS). A helical transmembrane segment spans residues 157-177 (FVMALFMAFGVSFEVPVAIVL). Topologically, residues 178 to 192 (LCWMGITSPEDLRKK) are cytoplasmic. The helical transmembrane segment at 193 to 210 (RPYVLVGAFVVGMLLTPP) threads the bilayer. A topological domain (periplasmic) is located at residue aspartate 211. Residues 212–232 (VFSQTLLAIPMYCLFEIGVFF) form a helical membrane-spanning segment. Topologically, residues 233–258 (SRFYVGKGRNREEENDAEAESEKTEE) are cytoplasmic.

This sequence belongs to the TatC family. As to quaternary structure, the Tat system comprises two distinct complexes: a TatABC complex, containing multiple copies of TatA, TatB and TatC subunits, and a separate TatA complex, containing only TatA subunits. Substrates initially bind to the TatABC complex, which probably triggers association of the separate TatA complex to form the active translocon. TatC can form a distinct, stable, multimeric complex independent of TatA and TatB. Each of TatA, TatB and TatC are able to interact in pairs without the third partner. Interacts with the signal sequence of DmsA and DmsD.

It localises to the cell inner membrane. Part of the twin-arginine translocation (Tat) system that transports large folded proteins containing a characteristic twin-arginine motif in their signal peptide across membranes. Together with TatB, TatC is part of a receptor directly interacting with Tat signal peptides. This is Sec-independent protein translocase protein TatC from Escherichia coli (strain K12).